We begin with the raw amino-acid sequence, 248 residues long: MRKAIIAGNWKMNKTIDEAVKMVEELKPLVKDATCDVVVCPTFVCLDAVKKAVAGSNIKVAAQNMHFEESGAFTGEVAPGMLEAMGIDYVVLGHSERREYFNETDEALNKKVKKAFEHNITPILCCGESLEQRENGTTNKVIEAQIKADIAGLTNEQVEKLVIAYEPIWAIGTGKTATDEQANETIKAIRAMVAEMYGSESAEKTRIQYGGSVKPNTIKAQMEMSDIDGALVGGASLVPADFAAIVNY.

9–11 (NWK) provides a ligand contact to substrate. His94 (electrophile) is an active-site residue. Residue Glu166 is the Proton acceptor of the active site. Substrate is bound by residues Gly172, Ser212, and 233 to 234 (GG).

Belongs to the triosephosphate isomerase family. As to quaternary structure, homodimer.

It localises to the cytoplasm. The enzyme catalyses D-glyceraldehyde 3-phosphate = dihydroxyacetone phosphate. It participates in carbohydrate biosynthesis; gluconeogenesis. Its pathway is carbohydrate degradation; glycolysis; D-glyceraldehyde 3-phosphate from glycerone phosphate: step 1/1. In terms of biological role, involved in the gluconeogenesis. Catalyzes stereospecifically the conversion of dihydroxyacetone phosphate (DHAP) to D-glyceraldehyde-3-phosphate (G3P). The sequence is that of Triosephosphate isomerase from Clostridium beijerinckii (strain ATCC 51743 / NCIMB 8052) (Clostridium acetobutylicum).